A 361-amino-acid polypeptide reads, in one-letter code: Chorismate synthase (361 aa).

R48 and R54 together coordinate NADP(+). FMN-binding positions include 125 to 127 (RSS), 238 to 239 (NA), G278, 293 to 297 (KPTSS), and R319.

The protein belongs to the chorismate synthase family. Homotetramer. The cofactor is FMNH2.

The enzyme catalyses 5-O-(1-carboxyvinyl)-3-phosphoshikimate = chorismate + phosphate. It functions in the pathway metabolic intermediate biosynthesis; chorismate biosynthesis; chorismate from D-erythrose 4-phosphate and phosphoenolpyruvate: step 7/7. Its function is as follows. Catalyzes the anti-1,4-elimination of the C-3 phosphate and the C-6 proR hydrogen from 5-enolpyruvylshikimate-3-phosphate (EPSP) to yield chorismate, which is the branch point compound that serves as the starting substrate for the three terminal pathways of aromatic amino acid biosynthesis. This reaction introduces a second double bond into the aromatic ring system. The chain is Chorismate synthase from Sodalis glossinidius (strain morsitans).